A 140-amino-acid polypeptide reads, in one-letter code: uncharacterized protein (140 aa).

N-linked (GlcNAc...) asparagine glycosylation occurs at asparagine 27. 3 helical membrane-spanning segments follow: residues 45–65 (FSLY…GVYA), 76–96 (VWIF…TGTV), and 116–136 (VPLC…YSMV).

Belongs to the TMEM170 family.

The protein resides in the membrane. This is an uncharacterized protein from Saccharomyces cerevisiae (strain ATCC 204508 / S288c) (Baker's yeast).